We begin with the raw amino-acid sequence, 232 residues long: Cilia- and flagella-associated protein 95 (232 aa).

The Extracellular portion of the chain corresponds to 1-96 (MDSSDSSCQE…PVWISETREK (96 aa)). N-linked (GlcNAc...) asparagine glycosylation is present at asparagine 75. Residues 97–115 (MAQVCLNTKLAKIKSKALL) form a helical membrane-spanning segment. Topologically, residues 116–232 (NEETMNSGII…TGGPIAPFLK (117 aa)) are cytoplasmic. A mn region spans residues 153–163 (LTTYAEEYAPP).

As to quaternary structure, microtubule inner protein component of sperm flagellar doublet microtubules. Interacts with MYH9. Interacts with MYH10. In terms of tissue distribution, expressed in trachea multiciliated cells.

Its subcellular location is the cytoplasm. The protein localises to the cytoskeleton. It localises to the cilium axoneme. The protein resides in the flagellum axoneme. It is found in the cell membrane. Functionally, microtubule inner protein (MIP) part of the dynein-decorated doublet microtubules (DMTs) in cilia axoneme, which is required for motile cilia beating. This Bos taurus (Bovine) protein is Cilia- and flagella-associated protein 95.